The chain runs to 336 residues: DNA-directed RNA polymerase subunit alpha (336 aa).

Residues 1–226 (MLIAQRPTLS…ELFGLARELN (226 aa)) are alpha N-terminal domain (alpha-NTD). Residues 243–336 (LAADMALPIE…SDDAFGDDEL (94 aa)) are alpha C-terminal domain (alpha-CTD).

It belongs to the RNA polymerase alpha chain family. In terms of assembly, homodimer. The RNAP catalytic core consists of 2 alpha, 1 beta, 1 beta' and 1 omega subunit. When a sigma factor is associated with the core the holoenzyme is formed, which can initiate transcription.

The catalysed reaction is RNA(n) + a ribonucleoside 5'-triphosphate = RNA(n+1) + diphosphate. Functionally, DNA-dependent RNA polymerase catalyzes the transcription of DNA into RNA using the four ribonucleoside triphosphates as substrates. This Renibacterium salmoninarum (strain ATCC 33209 / DSM 20767 / JCM 11484 / NBRC 15589 / NCIMB 2235) protein is DNA-directed RNA polymerase subunit alpha.